Consider the following 350-residue polypeptide: tRNA uridine(34) hydroxylase (350 aa).

A Rhodanese domain is found at 146–240 (DDPDALFIDM…YARKAREQGL (95 aa)). Catalysis depends on C200, which acts as the Cysteine persulfide intermediate.

The protein belongs to the TrhO family.

The catalysed reaction is uridine(34) in tRNA + AH2 + O2 = 5-hydroxyuridine(34) in tRNA + A + H2O. In terms of biological role, catalyzes oxygen-dependent 5-hydroxyuridine (ho5U) modification at position 34 in tRNAs, the first step in 5-carboxymethoxyuridine (cmo5U) biosynthesis. May be part of an alternate pathway, which is able to bypass cmo5U biogenesis in a subset of tRNAs under aerobic conditions. The protein is tRNA uridine(34) hydroxylase of Escherichia coli (strain K12).